The chain runs to 197 residues: SIGLEC family-like protein 1 (197 aa).

A helical membrane pass occupies residues glycine 118 to valine 138. The disordered stretch occupies residues valine 160–valine 179. Basic and acidic residues predominate over residues alanine 162–glycine 176.

The protein localises to the membrane. The chain is SIGLEC family-like protein 1 (SIGLECL1) from Homo sapiens (Human).